Here is a 109-residue protein sequence, read N- to C-terminus: Thioredoxin (109 aa).

Residues 2–109 form the Thioredoxin domain; that stretch reads TNCIVELTDG…LKDFLNLYLK (108 aa). Cysteine 33 and cysteine 36 form a disulfide bridge.

This sequence belongs to the thioredoxin family.

In terms of biological role, participates in various redox reactions through the reversible oxidation of its active center dithiol to a disulfide and catalyzes dithiol-disulfide exchange reactions. The sequence is that of Thioredoxin (trxA) from Buchnera aphidicola subsp. Baizongia pistaciae (strain Bp).